The following is a 535-amino-acid chain: Phosphoenolpyruvate carboxykinase (ATP) (535 aa).

Substrate is bound by residues arginine 59, tyrosine 201, and lysine 207. ATP contacts are provided by residues lysine 207, histidine 226, and 243 to 251 (GLSGTGKTT). Mn(2+) is bound by residues lysine 207 and histidine 226. Aspartate 264 provides a ligand contact to Mn(2+). Residues glutamate 292, arginine 328, 444-445 (RI), and threonine 450 contribute to the ATP site. Arginine 328 contacts substrate.

Belongs to the phosphoenolpyruvate carboxykinase (ATP) family. It depends on Mn(2+) as a cofactor.

The protein resides in the cytoplasm. It carries out the reaction oxaloacetate + ATP = phosphoenolpyruvate + ADP + CO2. It participates in carbohydrate biosynthesis; gluconeogenesis. Functionally, involved in the gluconeogenesis. Catalyzes the conversion of oxaloacetate (OAA) to phosphoenolpyruvate (PEP) through direct phosphoryl transfer between the nucleoside triphosphate and OAA. This Bacteroides fragilis (strain ATCC 25285 / DSM 2151 / CCUG 4856 / JCM 11019 / LMG 10263 / NCTC 9343 / Onslow / VPI 2553 / EN-2) protein is Phosphoenolpyruvate carboxykinase (ATP).